Here is an 82-residue protein sequence, read N- to C-terminus: RNA-binding protein YbxF (82 aa).

Belongs to the eukaryotic ribosomal protein eL8 family.

The protein is RNA-binding protein YbxF of Geobacillus stearothermophilus (Bacillus stearothermophilus).